An 85-amino-acid chain; its full sequence is Kappa-theraphotoxin-Gr1a (85 aa).

An N-terminal signal peptide occupies residues 1-21 (MKTSVFAAILGLALFAVLCSG). A propeptide spanning residues 22–49 (SELQEKDLKETLLSAIMETALEAQPEER) is cleaved from the precursor. 3 disulfides stabilise this stretch: C51–C65, C58–C70, and C64–C77. The interval 53 to 55 (YLF) is involved in active face.

The protein belongs to the neurotoxin 10 (Hwtx-1) family. 09 (HaTx) subfamily. Expressed by the venom gland.

The protein resides in the secreted. Inhibits Kv2.1/KCNB1 and Kv4.2/KCND2 voltage-gated potassium channels. Acts as a gating modifier by shifting channel openings to more depolarized voltages and acts via the occupancy of multiple binding sites on the channel. The toxin binding sites are situated on the S3-S4 extracellular linker of the channel. At least two hanatoxin molecules can occupy the Kv2.1/KCNB1 channel, and maybe more (three or four). Can also inhibit calcium channels (Cav2.1/CACNA1A). Needs to partition into the membrane in order to bind to the channel. This Grammostola rosea (Chilean rose tarantula) protein is Kappa-theraphotoxin-Gr1a.